The following is a 94-amino-acid chain: Elongation factor 1-beta (94 aa).

The protein belongs to the EF-1-beta/EF-1-delta family.

Its function is as follows. Promotes the exchange of GDP for GTP in EF-1-alpha/GDP, thus allowing the regeneration of EF-1-alpha/GTP that could then be used to form the ternary complex EF-1-alpha/GTP/AAtRNA. This Ignicoccus hospitalis (strain KIN4/I / DSM 18386 / JCM 14125) protein is Elongation factor 1-beta.